The primary structure comprises 153 residues: Transcriptional repressor NrdR (153 aa).

The tract at residues 1–20 (MKCPFCNSADTRVKNSRHSD) is disordered. The segment at 3 to 34 (CPFCNSADTRVKNSRHSDDNMSVRRRRLCEVC) is a zinc-finger region. Residues 11-20 (TRVKNSRHSD) are compositionally biased toward basic and acidic residues. The region spanning 49–139 (IMVLKKDGRM…VYMDFSDADD (91 aa)) is the ATP-cone domain.

It belongs to the NrdR family. Requires Zn(2+) as cofactor.

In terms of biological role, negatively regulates transcription of bacterial ribonucleotide reductase nrd genes and operons by binding to NrdR-boxes. The sequence is that of Transcriptional repressor NrdR from Anaplasma phagocytophilum (strain HZ).